Reading from the N-terminus, the 479-residue chain is Pre-glycoprotein polyprotein GP complex (479 aa).

Glycine 2 carries N-myristoyl glycine; by host lipidation. The Extracellular segment spans residues 2–17; it reads GQLISFFQDIPIFFEE. Residues 18-32 traverse the membrane as a helical segment; sequence ALNVALAVVTLLAII. A topological domain (cytoplasmic) is located at residue lysine 33. The chain crosses the membrane as a helical span at residues 34-53; it reads GIVNVWKSGILQLFVFLVLA. Extracellular-side segments run 54-58 and 59-418; these read GRSCS and FKVG…TLVD. Cysteine 57 provides a ligand contact to Zn(2+). Intrachain disulfides connect cysteine 85/cysteine 221, cysteine 265/cysteine 278, and cysteine 287/cysteine 296. 5 N-linked (GlcNAc...) asparagine; by host glycosylation sites follow: asparagine 88, asparagine 125, asparagine 174, asparagine 202, and asparagine 214. N-linked (GlcNAc...) asparagine; by host glycosylation is found at asparagine 314, asparagine 351, asparagine 359, asparagine 376, and asparagine 381. Cysteine 350 and cysteine 371 are oxidised to a cystine. The helical transmembrane segment at 419-439 threads the bilayer; sequence LCFWSAIFFTTSLFLHLVGFP. Over 440–479 the chain is Cytoplasmic; that stretch reads THRHIQGDPCPLPHRLDRNGACRCGRFQKLGKQVTWKRKH. Residues histidine 441, histidine 443, cysteine 449, histidine 453, cysteine 461, cysteine 463, and histidine 479 each coordinate Zn(2+).

The protein belongs to the arenaviridae GPC protein family. As to quaternary structure, homotetramer; disulfide-linked. Homotetramer. GP2 homotetramers bind through ionic interactions with GP1 homotetramers to form the GP complex together with the stable signal peptide. The GP-C polyprotein interacts with the host protease MBTPS1/SKI-1 resulting in the polyprotein processing. In terms of processing, specific enzymatic cleavages in vivo yield mature proteins. GP-C polyprotein is cleaved in the endoplasmic reticulum by the host protease MBTPS1. Only cleaved glycoprotein is incorporated into virions. Post-translationally, the SSP remains stably associated with the GP complex following cleavage by signal peptidase and plays crucial roles in the trafficking of GP through the secretory pathway. Myristoylation is necessary for GP2-mediated fusion activity.

It localises to the virion membrane. It is found in the host endoplasmic reticulum membrane. The protein localises to the host Golgi apparatus membrane. Its subcellular location is the host cell membrane. Functionally, interacts with the host receptor. Mediates virus attachment to host TFRC. This attachment induces virion internalization predominantly through clathrin-mediated endocytosis. In terms of biological role, class I viral fusion protein that directs fusion of viral and host endosomal membranes, leading to delivery of the nucleocapsid into the cytoplasm. Membrane fusion is mediated by irreversible conformational changes induced upon acidification in the endosome. Its function is as follows. Stable signal peptide (SSP): cleaved and functions as a signal peptide. In addition, it is also retained as the third component of the GP complex. The SSP is required for efficient glycoprotein expression, post-translational maturation cleavage of GP1 and GP2, glycoprotein transport to the cell surface plasma membrane, formation of infectious virus particles, and acid pH-dependent glycoprotein-mediated cell fusion. The chain is Pre-glycoprotein polyprotein GP complex from Homo sapiens (Human).